The chain runs to 187 residues: Potassium-transporting ATPase KdpC subunit (187 aa).

A helical transmembrane segment spans residues 10–30; the sequence is LVAATMLICVAGYSAAVWAVG.

The protein belongs to the KdpC family. The system is composed of three essential subunits: KdpA, KdpB and KdpC.

It localises to the cell inner membrane. Functionally, part of the high-affinity ATP-driven potassium transport (or Kdp) system, which catalyzes the hydrolysis of ATP coupled with the electrogenic transport of potassium into the cytoplasm. This subunit acts as a catalytic chaperone that increases the ATP-binding affinity of the ATP-hydrolyzing subunit KdpB by the formation of a transient KdpB/KdpC/ATP ternary complex. The polypeptide is Potassium-transporting ATPase KdpC subunit (Parvibaculum lavamentivorans (strain DS-1 / DSM 13023 / NCIMB 13966)).